Reading from the N-terminus, the 1343-residue chain is DNA-directed RNA polymerase subunit beta (1343 aa).

Belongs to the RNA polymerase beta chain family. The RNAP catalytic core consists of 2 alpha, 1 beta, 1 beta' and 1 omega subunit. When a sigma factor is associated with the core the holoenzyme is formed, which can initiate transcription.

The catalysed reaction is RNA(n) + a ribonucleoside 5'-triphosphate = RNA(n+1) + diphosphate. In terms of biological role, DNA-dependent RNA polymerase catalyzes the transcription of DNA into RNA using the four ribonucleoside triphosphates as substrates. This chain is DNA-directed RNA polymerase subunit beta, found in Haemophilus influenzae (strain PittGG).